A 245-amino-acid chain; its full sequence is Ribonuclease PH (245 aa).

Residues arginine 87 and 125–127 (GTR) each bind phosphate.

It belongs to the RNase PH family. As to quaternary structure, homohexameric ring arranged as a trimer of dimers.

It carries out the reaction tRNA(n+1) + phosphate = tRNA(n) + a ribonucleoside 5'-diphosphate. Functionally, phosphorolytic 3'-5' exoribonuclease that plays an important role in tRNA 3'-end maturation. Removes nucleotide residues following the 3'-CCA terminus of tRNAs; can also add nucleotides to the ends of RNA molecules by using nucleoside diphosphates as substrates, but this may not be physiologically important. Probably plays a role in initiation of 16S rRNA degradation (leading to ribosome degradation) during starvation. The polypeptide is Ribonuclease PH (Streptomyces griseus subsp. griseus (strain JCM 4626 / CBS 651.72 / NBRC 13350 / KCC S-0626 / ISP 5235)).